A 266-amino-acid polypeptide reads, in one-letter code: Ribosomal RNA small subunit methyltransferase A (266 aa).

S-adenosyl-L-methionine-binding residues include asparagine 12, leucine 14, glycine 39, glutamate 61, aspartate 87, and asparagine 107.

This sequence belongs to the class I-like SAM-binding methyltransferase superfamily. rRNA adenine N(6)-methyltransferase family. RsmA subfamily.

It localises to the cytoplasm. It carries out the reaction adenosine(1518)/adenosine(1519) in 16S rRNA + 4 S-adenosyl-L-methionine = N(6)-dimethyladenosine(1518)/N(6)-dimethyladenosine(1519) in 16S rRNA + 4 S-adenosyl-L-homocysteine + 4 H(+). In terms of biological role, specifically dimethylates two adjacent adenosines (A1518 and A1519) in the loop of a conserved hairpin near the 3'-end of 16S rRNA in the 30S particle. May play a critical role in biogenesis of 30S subunits. This chain is Ribosomal RNA small subunit methyltransferase A, found in Nitratidesulfovibrio vulgaris (strain DP4) (Desulfovibrio vulgaris).